The following is an 874-amino-acid chain: Probable inorganic carbon transporter subunit DabA (874 aa).

Residues Cys398, Asp400, His580, and Cys595 each contribute to the Zn(2+) site.

It belongs to the inorganic carbon transporter (TC 9.A.2) DabA family. In terms of assembly, forms a complex with DabB. The cofactor is Zn(2+).

Its subcellular location is the cell membrane. Its function is as follows. Part of an energy-coupled inorganic carbon pump. The protein is Probable inorganic carbon transporter subunit DabA of Bacillus cereus (strain AH187).